We begin with the raw amino-acid sequence, 277 residues long: Large ribosomal subunit protein uL2 (277 aa).

2 disordered regions span residues 37-60 (KNST…GHKH) and 223-264 (VVMN…NKRT). Positions 39 to 49 (STAGRNNNGHI) are enriched in polar residues. Residues 50 to 60 (TTRHKGGGHKH) are compositionally biased toward basic residues. Over residues 229 to 244 (DHPHGGGEGRTGEARE) the composition is skewed to basic and acidic residues.

Belongs to the universal ribosomal protein uL2 family. In terms of assembly, part of the 50S ribosomal subunit. Forms a bridge to the 30S subunit in the 70S ribosome.

Functionally, one of the primary rRNA binding proteins. Required for association of the 30S and 50S subunits to form the 70S ribosome, for tRNA binding and peptide bond formation. It has been suggested to have peptidyltransferase activity; this is somewhat controversial. Makes several contacts with the 16S rRNA in the 70S ribosome. The chain is Large ribosomal subunit protein uL2 from Neisseria meningitidis serogroup B (strain ATCC BAA-335 / MC58).